A 175-amino-acid chain; its full sequence is S-fimbrial protein subunit SfaG (175 aa).

Residues 1–27 (MVKDIIKTVTFSCMLAGSMFVTCHVCA) form the signal peptide. Cys43 and Cys83 are disulfide-bonded.

It belongs to the fimbrial protein family.

The protein localises to the fimbrium. Fimbriae (also called pili), polar filaments radiating from the surface of the bacterium to a length of 0.5-1.5 micrometers and numbering 100-300 per cell, enable bacteria to colonize the epithelium of specific host organs. In terms of biological role, a minor fimbrial subunit. This protein is necessary for full expression of S-specific binding. S-fimbrial adhesins enable pathogenic E.coli causing urinary-tract infections or newborn meningitis to attach to glycoproteins terminating with alpha-sialic acid-(2-3)-beta-Gal. This chain is S-fimbrial protein subunit SfaG (sfaG), found in Escherichia coli O6:K15:H31 (strain 536 / UPEC).